The following is a 141-amino-acid chain: Hydroperoxide reductase (141 aa).

Belongs to the OsmC/Ohr family. As to quaternary structure, homodimer.

The protein localises to the cytoplasm. Functionally, reduces organic and inorganic peroxide substrates. Protects the cell against oxidative stress. In Mycoplasma genitalium (strain ATCC 33530 / DSM 19775 / NCTC 10195 / G37) (Mycoplasmoides genitalium), this protein is Hydroperoxide reductase.